Here is a 298-residue protein sequence, read N- to C-terminus: 4-diphosphocytidyl-2-C-methyl-D-erythritol kinase (298 aa).

The active site involves Lys15. An ATP-binding site is contributed by 102 to 112 (PVAAGIGGGSS). Asp142 is an active-site residue.

It belongs to the GHMP kinase family. IspE subfamily.

It catalyses the reaction 4-CDP-2-C-methyl-D-erythritol + ATP = 4-CDP-2-C-methyl-D-erythritol 2-phosphate + ADP + H(+). It participates in isoprenoid biosynthesis; isopentenyl diphosphate biosynthesis via DXP pathway; isopentenyl diphosphate from 1-deoxy-D-xylulose 5-phosphate: step 3/6. Functionally, catalyzes the phosphorylation of the position 2 hydroxy group of 4-diphosphocytidyl-2C-methyl-D-erythritol. In Hyphomonas neptunium (strain ATCC 15444), this protein is 4-diphosphocytidyl-2-C-methyl-D-erythritol kinase.